The primary structure comprises 300 residues: MSKKALLILHGKQADNQSVRNAVIDWRNQGHELAVRVTWEGGDAERYVREALDNGFKTIIAGGGDGSVRDITQALMENGNSELELAIIPLGTANDFATAAEVSEEPADALSLLNRPAQPCDVIRVNNHYFLNMATGGFGTEVTTQTSEELKKMLGGAAYLLTGLTRFSEIESAKGHFKGEDFEWEGDFLALGLGNGRQAGGGQRLCPDALVNDGLFDVAILPADMDLLAGVKELFDSEARQDPDQEGLFVRTRLSEMKIETPTPMNLNLDGEPIQNTTFQIQAIRNALRLYLPEGCPLLG.

Positions Met-1–Tyr-129 constitute a DAGKc domain. Residues Thr-38, Gly-64–Asp-70, and Thr-92 each bind ATP. Mg(2+) contacts are provided by Leu-210, Asp-213, and Leu-215. Glu-272 acts as the Proton acceptor in catalysis.

The protein belongs to the diacylglycerol/lipid kinase family. YegS lipid kinase subfamily. The cofactor is Mg(2+). Requires Ca(2+) as cofactor.

It localises to the cytoplasm. Its function is as follows. Probably phosphorylates lipids; the in vivo substrate is unknown. The polypeptide is Probable lipid kinase YegS-like (Alcanivorax borkumensis (strain ATCC 700651 / DSM 11573 / NCIMB 13689 / SK2)).